The primary structure comprises 657 residues: Probable potassium transport system protein Kup (657 aa).

The interval 1 to 25 (MGSGPADEEHTVDTEPGVSPPRRTV) is disordered. Transmembrane regions (helical) follow at residues 35–55 (VVVG…IYTI), 77–97 (VVSL…VLLV), 127–147 (TAVL…DSMI), 165–185 (PGLE…LFSV), 196–216 (LFGP…VSGI), 234–254 (FFFG…LAVT), 275–295 (WLVL…ALLL), 315–335 (WPMV…VITG), 365–385 (IYVP…VFAF), 394–414 (AFGM…FYIV), 422–442 (LWLV…FLAA), and 447–467 (LVHG…VMTT).

This sequence belongs to the HAK/KUP transporter (TC 2.A.72) family.

The protein resides in the cell membrane. It catalyses the reaction K(+)(in) + H(+)(in) = K(+)(out) + H(+)(out). Functionally, transport of potassium into the cell. Likely operates as a K(+):H(+) symporter. In Rhodococcus jostii (strain RHA1), this protein is Probable potassium transport system protein Kup.